The following is a 169-amino-acid chain: Gamma-crystallin 2 (169 aa).

2 consecutive Beta/gamma crystallin 'Greek key' domains span residues 1-34 and 35-77; these read YEDRNFQGRCYECSGDCADLHSYFSRCNSIKVDS and GCWM…KVIP. The connecting peptide stretch occupies residues 78 to 82; the sequence is QQKGP. Beta/gamma crystallin 'Greek key' domains lie at 83–123 and 124–166; these read HKMK…NVLE and GHWI…RRVL.

This sequence belongs to the beta/gamma-crystallin family. In terms of assembly, monomer.

Its function is as follows. Crystallins are the dominant structural components of the vertebrate eye lens. The polypeptide is Gamma-crystallin 2 (Rana temporaria (European common frog)).